A 386-amino-acid chain; its full sequence is Probable mannan endo-1,4-beta-mannosidase A (386 aa).

Positions 1-21 (MKLNPSLLTAAGLVSAQLASA) are cleaved as a signal peptide. Substrate is bound by residues Trp-95 and Asn-207. Glu-208 acts as the Proton donor in catalysis. Tyr-283 lines the substrate pocket. The active-site Nucleophile is Glu-316. Asn-336 carries an N-linked (GlcNAc...) asparagine glycan. Trp-346 contacts substrate.

This sequence belongs to the glycosyl hydrolase 5 (cellulase A) family.

The protein resides in the secreted. It catalyses the reaction Random hydrolysis of (1-&gt;4)-beta-D-mannosidic linkages in mannans, galactomannans and glucomannans.. Its function is as follows. Endo-1,4-mannanase, a crucial enzyme for depolymerization of seed galactomannans and wood galactoglucomannans. The chain is Probable mannan endo-1,4-beta-mannosidase A (manA) from Aspergillus oryzae (strain ATCC 42149 / RIB 40) (Yellow koji mold).